A 418-amino-acid polypeptide reads, in one-letter code: UDP-N-acetylglucosamine 1-carboxyvinyltransferase 1 (418 aa).

Phosphoenolpyruvate is bound at residue 22 to 23; it reads KN. A UDP-N-acetyl-alpha-D-glucosamine-binding site is contributed by arginine 94. The active-site Proton donor is the cysteine 118. 2-(S-cysteinyl)pyruvic acid O-phosphothioketal is present on cysteine 118. UDP-N-acetyl-alpha-D-glucosamine is bound by residues 123-127, aspartate 306, and isoleucine 328; that span reads RPIDL.

The protein belongs to the EPSP synthase family. MurA subfamily.

Its subcellular location is the cytoplasm. It catalyses the reaction phosphoenolpyruvate + UDP-N-acetyl-alpha-D-glucosamine = UDP-N-acetyl-3-O-(1-carboxyvinyl)-alpha-D-glucosamine + phosphate. Its pathway is cell wall biogenesis; peptidoglycan biosynthesis. Its function is as follows. Cell wall formation. Adds enolpyruvyl to UDP-N-acetylglucosamine. This is UDP-N-acetylglucosamine 1-carboxyvinyltransferase 1 from Clostridium acetobutylicum (strain ATCC 824 / DSM 792 / JCM 1419 / IAM 19013 / LMG 5710 / NBRC 13948 / NRRL B-527 / VKM B-1787 / 2291 / W).